A 760-amino-acid chain; its full sequence is Xaa-Pro dipeptidyl-peptidase (760 aa).

Catalysis depends on charge relay system residues Ser349, Asp469, and His499.

Belongs to the peptidase S15 family. In terms of assembly, homodimer.

The protein localises to the cytoplasm. It carries out the reaction Hydrolyzes Xaa-Pro-|- bonds to release unblocked, N-terminal dipeptides from substrates including Ala-Pro-|-p-nitroanilide and (sequentially) Tyr-Pro-|-Phe-Pro-|-Gly-Pro-|-Ile.. Its function is as follows. Removes N-terminal dipeptides sequentially from polypeptides having unsubstituted N-termini provided that the penultimate residue is proline. The sequence is that of Xaa-Pro dipeptidyl-peptidase from Streptococcus pyogenes serotype M4 (strain MGAS10750).